The sequence spans 89 residues: Large ribosomal subunit protein bL27 (89 aa).

The tract at residues 1–24 is disordered; it reads MAHKKGTGSTRNGRDSNAKRLGVK.

Belongs to the bacterial ribosomal protein bL27 family.

The protein is Large ribosomal subunit protein bL27 of Synechococcus sp. (strain JA-2-3B'a(2-13)) (Cyanobacteria bacterium Yellowstone B-Prime).